Consider the following 748-residue polypeptide: MAEAVERTDELVREYLLFRGFTHTLRQLDAEIKADKEKGFRVDKIVDQLQQLMQVYDLAALRDYWSYLERRLFSRLEDIYRPTINKLKTSLFRFYLVYTIQTNRNDKAQEFFAKQATELQNQAEWKDWFVLPFLPSPDTNPTFATYFSRQWADTFIISLHNFLSVLFQCMPVPVILNFDAECQRTNQVQEENEVLRQKLFALQAEIHRLKKEEQQQEEEAAALVQHKLPPYVSSMDRLGDSELALVCSQRPASLSQSPRVGFLSSLLPQSKKSPSRLSPAQGPPQAQSSAKKDSFSSQATKGKDSVPGAKDGKSLLSGPVPGEASWTHQRQRRLQDHGKERRELLSTSSSQSQCAERKPEVSGAEAEPCLELHMGPVEVLARVSTAGSEGDRPEQPFIVLSQEEYGEHHSSIMHCRVDCSGRRVASLDVDGVIKVWSFNPIMQTKASSISKSPLLSLEWATKRDRLLLLGSGVGTVRLYDTEAKKNLCEININDDMPRILSLACSPNGASFVCSAAAPSLTSQTDSSAPDIGSKGMNQVPGKLLLWDTKTMKQQLQFSLDPEPIAINCTAFNHNGNLLVTGAADGVIRLFDMQQHECAMSWKAHCGEVYSVEFSCDENAVYSIGEDRKFIQWNIHKSGLKVSESNLPSDATGPFVLSGYSGYKQVQVPRGRLFAFDSEGNYMLTCSATGGLIYKLGSEEKVLENCLSLGGHRAPVVTVDWSTAMDCGTCLTASMDGKIKLTTLLAHKL.

Residues Gln-183–Leu-228 are a coiled coil. The residue at position 257 (Ser-257) is a Phosphoserine. Residues Leu-266–Pro-279 show a composition bias toward low complexity. A disordered region spans residues Leu-266 to Pro-368. Positions Pro-284 to Thr-300 are enriched in polar residues. Ser-289 and Ser-294 each carry phosphoserine. Over residues Arg-333–Leu-344 the composition is skewed to basic and acidic residues. Over residues Leu-345–Cys-354 the composition is skewed to polar residues. WD repeat units follow at residues Glu-407 to Ala-446, Ile-449 to Glu-489, Val-512 to Gln-556, Pro-561 to Ser-600, Ala-603 to Ser-642, Val-665 to Glu-703, and Gly-710 to Leu-748.

The protein belongs to the WD repeat WDR91 family. As to quaternary structure, interacts with WDR81; involved in early to late endosome cargo transport. Interacts with BECN1; negatively regulates the PI3 kinase/PI3K activity associated with endosomal membranes.

It localises to the early endosome membrane. The protein resides in the late endosome membrane. Functions as a negative regulator of the PI3 kinase/PI3K activity associated with endosomal membranes via BECN1, a core subunit of the PI3K complex. By modifying the phosphatidylinositol 3-phosphate/PtdInsP3 content of endosomal membranes may regulate endosome fusion, recycling, sorting and early to late endosome transport. It is for instance, required for the delivery of cargos like BST2/tetherin from early to late endosome and thereby participates indirectly to their degradation by the lysosome. May play a role in meiosis. The sequence is that of WD repeat-containing protein 91 from Mus musculus (Mouse).